The following is a 1070-amino-acid chain: Isoleucine--tRNA ligase (1070 aa).

A 'HIGH' region motif is present at residues 50–60 (PYTSGAAHMGT). The 'KMSKS' region signature appears at 606–610 (GMSKS). Lys609 contacts ATP.

It belongs to the class-I aminoacyl-tRNA synthetase family. IleS type 2 subfamily. Monomer. Zn(2+) serves as cofactor.

The protein localises to the cytoplasm. The enzyme catalyses tRNA(Ile) + L-isoleucine + ATP = L-isoleucyl-tRNA(Ile) + AMP + diphosphate. Functionally, catalyzes the attachment of isoleucine to tRNA(Ile). As IleRS can inadvertently accommodate and process structurally similar amino acids such as valine, to avoid such errors it has two additional distinct tRNA(Ile)-dependent editing activities. One activity is designated as 'pretransfer' editing and involves the hydrolysis of activated Val-AMP. The other activity is designated 'posttransfer' editing and involves deacylation of mischarged Val-tRNA(Ile). This is Isoleucine--tRNA ligase from Halobacterium salinarum (strain ATCC 700922 / JCM 11081 / NRC-1) (Halobacterium halobium).